The chain runs to 968 residues: Alanine--tRNA ligase, cytoplasmic (968 aa).

An N-acetylmethionine modification is found at methionine 1. Position 3 is a phosphoserine (serine 3). N6-acetyllysine is present on lysine 19. Residues arginine 77, histidine 95, tryptophan 176, and 214–216 (IWN) contribute to the ATP site. Residues asparagine 216 and aspartate 239 each contribute to the L-alanine site. Glycine 243 contacts ATP. 2 positions are modified to phosphoserine: serine 399 and serine 555. The Zn(2+) site is built by histidine 605, histidine 609, cysteine 723, and histidine 727. The short motif at 750–763 (RRIVAVTGAEAQKA) is the Nuclear localization signal element. Position 876 is an N6-acetyllysine (lysine 876). Lysine 943 is subject to N6,N6,N6-trimethyllysine; alternate. Lysine 943 carries the N6,N6-dimethyllysine; alternate modification. Lysine 943 is modified (N6-methyllysine; alternate).

The protein belongs to the class-II aminoacyl-tRNA synthetase family. In terms of assembly, monomer. Interacts with ANKRD16; the interaction is direct. The cofactor is Zn(2+). In terms of processing, ISGylated. Post-translationally, methylation at 'Lys-943' by METTL21C.

It is found in the cytoplasm. The protein resides in the nucleus. The catalysed reaction is tRNA(Ala) + L-alanine + ATP = L-alanyl-tRNA(Ala) + AMP + diphosphate. It carries out the reaction (S)-lactate + ATP + H(+) = (S)-lactoyl-AMP + diphosphate. The enzyme catalyses (S)-lactoyl-AMP + L-lysyl-[protein] = N(6)-[(S)-lactoyl]-L-lysyl-[protein] + AMP + 2 H(+). The protein lactyltransferase activity is inhibited by beta-alanine. Catalyzes the attachment of alanine to tRNA(Ala) in a two-step reaction: alanine is first activated by ATP to form Ala-AMP and then transferred to the acceptor end of tRNA(Ala). Also edits incorrectly charged tRNA(Ala) via its editing domain. In presence of high levels of lactate, also acts as a protein lactyltransferase that mediates lactylation of lysine residues in target proteins, such as TEAD1, TP53/p53 and YAP1. Protein lactylation takes place in a two-step reaction: lactate is first activated by ATP to form lactate-AMP and then transferred to lysine residues of target proteins. Acts as an inhibitor of TP53/p53 activity by catalyzing lactylation of TP53/p53. Acts as a positive regulator of the Hippo pathway by mediating lactylation of TEAD1 and YAP1. This chain is Alanine--tRNA ligase, cytoplasmic (Aars1), found in Rattus norvegicus (Rat).